The following is a 500-amino-acid chain: Glycerol kinase (500 aa).

Thr13 serves as a coordination point for ADP. Residues Thr13, Thr14, and Ser15 each coordinate ATP. Thr13 is a binding site for sn-glycerol 3-phosphate. Residue Arg17 coordinates ADP. 4 residues coordinate sn-glycerol 3-phosphate: Arg83, Glu84, Tyr136, and Asp246. 5 residues coordinate glycerol: Arg83, Glu84, Tyr136, Asp246, and Gln247. Thr268 and Gly311 together coordinate ADP. Residues Thr268, Gly311, Gln315, and Gly412 each contribute to the ATP site. 2 residues coordinate ADP: Gly412 and Asn416.

This sequence belongs to the FGGY kinase family.

It carries out the reaction glycerol + ATP = sn-glycerol 3-phosphate + ADP + H(+). It functions in the pathway polyol metabolism; glycerol degradation via glycerol kinase pathway; sn-glycerol 3-phosphate from glycerol: step 1/1. Inhibited by fructose 1,6-bisphosphate (FBP). Key enzyme in the regulation of glycerol uptake and metabolism. Catalyzes the phosphorylation of glycerol to yield sn-glycerol 3-phosphate. This chain is Glycerol kinase, found in Francisella tularensis subsp. novicida (strain U112).